Consider the following 185-residue polypeptide: Elongation factor P (185 aa).

The protein belongs to the elongation factor P family.

The protein resides in the cytoplasm. It functions in the pathway protein biosynthesis; polypeptide chain elongation. Functionally, involved in peptide bond synthesis. Stimulates efficient translation and peptide-bond synthesis on native or reconstituted 70S ribosomes in vitro. Probably functions indirectly by altering the affinity of the ribosome for aminoacyl-tRNA, thus increasing their reactivity as acceptors for peptidyl transferase. In Caldicellulosiruptor bescii (strain ATCC BAA-1888 / DSM 6725 / KCTC 15123 / Z-1320) (Anaerocellum thermophilum), this protein is Elongation factor P.